A 38-amino-acid chain; its full sequence is Large ribosomal subunit protein bL36 (38 aa).

The protein belongs to the bacterial ribosomal protein bL36 family.

This chain is Large ribosomal subunit protein bL36, found in Sorangium cellulosum (strain So ce56) (Polyangium cellulosum (strain So ce56)).